Reading from the N-terminus, the 166-residue chain is uncharacterized protein (166 aa).

3 consecutive 4Fe-4S ferredoxin-type domains span residues 3 to 33 (MKKIIMTNFNCDNCGDCVKACMEKNKVGRIA), 37 to 67 (KDGKYIPIVCQHCASAPCKEVCPVSAIEHKD), and 68 to 97 (GYVYLNEDVCIGCGLCALACPFGAILMEDK). [4Fe-4S] cluster-binding residues include C13, C16, C19, C23, C46, C49, C54, C58, C77, C80, C83, C87, C101, C104, C111, and C115.

Requires [4Fe-4S] cluster as cofactor.

This is an uncharacterized protein from Methanocaldococcus jannaschii (strain ATCC 43067 / DSM 2661 / JAL-1 / JCM 10045 / NBRC 100440) (Methanococcus jannaschii).